The following is a 172-amino-acid chain: Neuropeptide-like protein nlp-8 (172 aa).

Residues 1–26 form the signal peptide; sequence MSQKLLPISPLQLLFLQCLLIGFTAA.

May be processed by convertase egl-3.

It localises to the secreted. Functionally, neuropeptide-like protein. Plays a role in behaviors associated with a sleep-like state induced by stress (SIS), acting in concert with the FARP (FMRFamide related) peptides, flp-13 and flp-24. The sequence is that of Neuropeptide-like protein nlp-8 from Caenorhabditis elegans.